The sequence spans 221 residues: uncharacterized protein (221 aa).

A signal peptide spans 1–18 (MKRFLLLIILFGISFSFV).

This is an uncharacterized protein from Aquifex aeolicus (strain VF5).